We begin with the raw amino-acid sequence, 156 residues long: Endogenous retrovirus group K member 24 Pro protein (156 aa).

One can recognise a Peptidase A2 domain in the interval 21–96; sequence FEGLVDTGAD…IPLNLWGRDL (76 aa). Aspartate 26 is an active-site residue. Positions 111–156 constitute a G-patch domain; it reads YSPTSQKIMTKMGYIPGKGLGKNEDGIKIPFEAKINQKREGIGYPF.

The protein belongs to the peptidase A2 family. HERV class-II K(HML-2) subfamily. Active as a homodimer. Post-translationally, autoproteolytically processed at the N-terminus. Expected C-terminal autoprocessing not detected. The sequence shown is that of the processed Pro protein.

It catalyses the reaction Processing at the authentic HIV-1 PR recognition site and release of the mature p17 matrix and the p24 capsid protein, as a result of the cleavage of the -SQNY-|-PIVQ- cleavage site.. In terms of biological role, retroviral proteases have roles in processing of the primary translation products and the maturation of the viral particle. Endogenous Pro proteins may have kept, lost or modified their original function during evolution. This endogenous protein has retained most of the characteristics of retroviral proteases. This chain is Endogenous retrovirus group K member 24 Pro protein (ERVK-24), found in Homo sapiens (Human).